The chain runs to 226 residues: Ribonuclease HII (226 aa).

In terms of domain architecture, RNase H type-2 spans 29-220; it reads GPVAGVDEAG…VVAAGVRLEQ (192 aa). Aspartate 35, glutamate 36, and aspartate 129 together coordinate a divalent metal cation.

It belongs to the RNase HII family. Mn(2+) is required as a cofactor. Mg(2+) serves as cofactor.

It localises to the cytoplasm. The enzyme catalyses Endonucleolytic cleavage to 5'-phosphomonoester.. In terms of biological role, endonuclease that specifically degrades the RNA of RNA-DNA hybrids. The protein is Ribonuclease HII of Rhodococcus erythropolis (strain PR4 / NBRC 100887).